The chain runs to 906 residues: MLGLGTLARKIFGTPNDRKVKSVRSLVARINELETEFQALSDEGIKQKTAEFQRRVQEGGESLDDLLPEAFANCREGARRALGLRAFDVQLMGGIFLHQGNIAEMKTGEGKTLVATFPAYLNALAGKGVHVVTVNDYLAKRDSEWMGKVYAQLGLTTGVVYPFQSEEEKKAAYRADITYATNNELGFDYLRDNMKASKEEMKQRGHFFAIVDEVDSILIDEARTPLIISGPSQDRSDLYTKVDKLIPELVEEHYKLDEKTRNVTFTEEGNEFLETRLHETGLLPEGQSLYDPESTTIVHHVNQGLRAHKLFHRDQQYIVRNDEIMLIDEFTGRMMRGRRLSDGLHQAIEAKEGVSIQPENVTLASVTFQNYFRLYDKLGGMTGTAATEAEEFMEIYGLGVVEVPTNRPVARTDEHDAVYRTAREKNDGIVASIKEAHERGQPILVGTTSIDKSEALSELLKAAGIPHNVLNARQHEQEAQIVADAGKPGAVTIATNMAGRGTDIQLGGNVEMKVMQALAADPTAHPDEIRARIEAEHAEEKQKVIDAGGLFVLGTERHESRRIDNQLRGRSGRQGDPGRSAFFLSLEDDLMRIFGSDRLDKVLSTLGMKDGEAIVHPWVNKSLEKAQAKVEARNFDIRKQLLKFDDVMNDQRKAIFSQRLEIMEAEDLSDIAQDMRYQVIDDLIDMHMPPKSYSDQWDIEGMHRAVMDKLGLDAPLAKWAQEEGVDQDVVRERLCEAADRQIADKTAAFGPETMRSIEKQILLQAIDAKWREHLLTLEHLRSVVGFRGYAQRDPLSEYKTEAFALFESMLNSLRQDVTQKLAQVRPLSEEEQQAVMRQFLDQQRTAAEAPASVPQPQAAVAPQPAPELVGADNGESQPQAWGDVARNDPCPCGSGLKYKHCHGRLD.

ATP is bound by residues glutamine 90, 108 to 112, and aspartate 503; that span reads GEGKT. Residues 845 to 882 form a disordered region; it reads TAAEAPASVPQPQAAVAPQPAPELVGADNGESQPQAWG. Positions 846–862 are enriched in low complexity; sequence AAEAPASVPQPQAAVAP. Zn(2+) contacts are provided by cysteine 890, cysteine 892, cysteine 901, and histidine 902.

The protein belongs to the SecA family. Monomer and homodimer. Part of the essential Sec protein translocation apparatus which comprises SecA, SecYEG and auxiliary proteins SecDF-YajC and YidC. It depends on Zn(2+) as a cofactor.

The protein localises to the cell inner membrane. The protein resides in the cytoplasm. It carries out the reaction ATP + H2O + cellular proteinSide 1 = ADP + phosphate + cellular proteinSide 2.. Part of the Sec protein translocase complex. Interacts with the SecYEG preprotein conducting channel. Has a central role in coupling the hydrolysis of ATP to the transfer of proteins into and across the cell membrane, serving both as a receptor for the preprotein-SecB complex and as an ATP-driven molecular motor driving the stepwise translocation of polypeptide chains across the membrane. The sequence is that of Protein translocase subunit SecA from Cereibacter sphaeroides (strain ATCC 17025 / ATH 2.4.3) (Rhodobacter sphaeroides).